Reading from the N-terminus, the 546-residue chain is Glutamate--tRNA ligase (546 aa).

The 'HIGH' region signature appears at 41–51 (PSPTGFQHIGG). The 'KMSKS' region signature appears at 293–297 (KLSKR). ATP is bound at residue K296.

Belongs to the class-I aminoacyl-tRNA synthetase family. Glutamate--tRNA ligase type 1 subfamily. In terms of assembly, monomer.

The protein resides in the cytoplasm. The enzyme catalyses tRNA(Glu) + L-glutamate + ATP = L-glutamyl-tRNA(Glu) + AMP + diphosphate. In terms of biological role, catalyzes the attachment of glutamate to tRNA(Glu) in a two-step reaction: glutamate is first activated by ATP to form Glu-AMP and then transferred to the acceptor end of tRNA(Glu). This chain is Glutamate--tRNA ligase, found in Clostridium perfringens (strain 13 / Type A).